The following is a 307-amino-acid chain: Protoheme IX farnesyltransferase (307 aa).

8 helical membrane-spanning segments follow: residues 32–52 (MGIV…ALHF), 65–85 (FFTI…NNYI), 108–128 (PGFA…FLLL), 131–151 (PMAV…YSLW), 158–178 (LNTV…WAAI), 186–206 (IAWM…LALA), 251–271 (LGIT…VLGF), and 287–307 (FVYS…VTFF).

The protein belongs to the UbiA prenyltransferase family. Protoheme IX farnesyltransferase subfamily. In terms of assembly, interacts with CtaA.

It localises to the cell membrane. The catalysed reaction is heme b + (2E,6E)-farnesyl diphosphate + H2O = Fe(II)-heme o + diphosphate. It functions in the pathway porphyrin-containing compound metabolism; heme O biosynthesis; heme O from protoheme: step 1/1. Converts heme B (protoheme IX) to heme O by substitution of the vinyl group on carbon 2 of heme B porphyrin ring with a hydroxyethyl farnesyl side group. This is Protoheme IX farnesyltransferase from Bacillus cereus (strain ATCC 10987 / NRS 248).